Here is a 365-residue protein sequence, read N- to C-terminus: Cobalt-precorrin-5B C(1)-methyltransferase (365 aa).

It belongs to the CbiD family.

It carries out the reaction Co-precorrin-5B + S-adenosyl-L-methionine = Co-precorrin-6A + S-adenosyl-L-homocysteine. Its pathway is cofactor biosynthesis; adenosylcobalamin biosynthesis; cob(II)yrinate a,c-diamide from sirohydrochlorin (anaerobic route): step 6/10. Its function is as follows. Catalyzes the methylation of C-1 in cobalt-precorrin-5B to form cobalt-precorrin-6A. The chain is Cobalt-precorrin-5B C(1)-methyltransferase from Clostridium perfringens (strain 13 / Type A).